Consider the following 606-residue polypeptide: Leucine-rich repeat and immunoglobulin-like domain-containing nogo receptor-interacting protein 2 (606 aa).

The N-terminal stretch at 1–27 (MLHTAIPCWQPFLGLAVVLLLMGSTIG) is a signal peptide. Residues 28-57 (CPARCECSAQNKSVSCHRRRLLAIPEGIPI) form the LRRNT domain. The Extracellular portion of the chain corresponds to 28–545 (CPARCECSAQ…LDLKTILVST (518 aa)). Asparagine 38 is a glycosylation site (N-linked (GlcNAc...) asparagine). LRR repeat units lie at residues 58–79 (ETKI…EFIS), 82–103 (LLEE…AFNN), 106–127 (NLRS…VFTG), 130–151 (NLTK…MFQD), 154–175 (NLKS…AFSG), 178–199 (SLEQ…ALSH), 202–223 (SLIA…AFKR), 226–247 (HLKN…NSLY), 250–271 (NLTS…AFKH), 274–295 (YLTH…MFSD), 298–319 (RLQE…SFQG), and 322–343 (FLRV…VFSS). An N-linked (GlcNAc...) asparagine glycan is attached at asparagine 130. An N-linked (GlcNAc...) asparagine glycan is attached at asparagine 188. Asparagine 250, asparagine 260, and asparagine 279 each carry an N-linked (GlcNAc...) asparagine glycan. Residue asparagine 327 is glycosylated (N-linked (GlcNAc...) asparagine). One can recognise an LRRCT domain in the interval 355–409 (NPLACDCRLLWLLQRQPNLQFGGQQPMCAGPDTIRERSFKDFHSTALSFYFTCKK). Cysteine 432 and cysteine 483 are joined by a disulfide. N-linked (GlcNAc...) asparagine glycans are attached at residues asparagine 491, asparagine 522, and asparagine 527. Residues 546-566 (AMGCFTFLGVVLFCFLLLFVW) traverse the membrane as a helical segment. Residues 567–606 (SRGKGKHKNSIDLEYVPRKNNGAVVEGEVAGPRRFNMKMI) are Cytoplasmic-facing.

The protein localises to the membrane. This Mus musculus (Mouse) protein is Leucine-rich repeat and immunoglobulin-like domain-containing nogo receptor-interacting protein 2 (Lingo2).